The following is a 154-amino-acid chain: 6,7-dimethyl-8-ribityllumazine synthase (154 aa).

5-amino-6-(D-ribitylamino)uracil contacts are provided by residues Trp22, 56 to 58 (AWE), and 80 to 82 (CVV). 85-86 (DT) contributes to the (2S)-2-hydroxy-3-oxobutyl phosphate binding site. His88 functions as the Proton donor in the catalytic mechanism. Asn113 lines the 5-amino-6-(D-ribitylamino)uracil pocket. Arg127 lines the (2S)-2-hydroxy-3-oxobutyl phosphate pocket.

The protein belongs to the DMRL synthase family. Forms an icosahedral capsid composed of 60 subunits, arranged as a dodecamer of pentamers.

The enzyme catalyses (2S)-2-hydroxy-3-oxobutyl phosphate + 5-amino-6-(D-ribitylamino)uracil = 6,7-dimethyl-8-(1-D-ribityl)lumazine + phosphate + 2 H2O + H(+). It functions in the pathway cofactor biosynthesis; riboflavin biosynthesis; riboflavin from 2-hydroxy-3-oxobutyl phosphate and 5-amino-6-(D-ribitylamino)uracil: step 1/2. Its function is as follows. Catalyzes the formation of 6,7-dimethyl-8-ribityllumazine by condensation of 5-amino-6-(D-ribitylamino)uracil with 3,4-dihydroxy-2-butanone 4-phosphate. This is the penultimate step in the biosynthesis of riboflavin. The protein is 6,7-dimethyl-8-ribityllumazine synthase of Xylella fastidiosa (strain 9a5c).